The chain runs to 119 residues: Small ribosomal subunit protein uS13 (119 aa).

A compositionally biased stretch (basic residues) spans G94–R113. The disordered stretch occupies residues G94–K119.

This sequence belongs to the universal ribosomal protein uS13 family. Part of the 30S ribosomal subunit. Forms a loose heterodimer with protein S19. Forms two bridges to the 50S subunit in the 70S ribosome.

Located at the top of the head of the 30S subunit, it contacts several helices of the 16S rRNA. In the 70S ribosome it contacts the 23S rRNA (bridge B1a) and protein L5 of the 50S subunit (bridge B1b), connecting the 2 subunits; these bridges are implicated in subunit movement. Contacts the tRNAs in the A and P-sites. In Nitrosomonas europaea (strain ATCC 19718 / CIP 103999 / KCTC 2705 / NBRC 14298), this protein is Small ribosomal subunit protein uS13.